The primary structure comprises 123 residues: Large ribosomal subunit protein bL20 (123 aa).

Belongs to the bacterial ribosomal protein bL20 family.

In terms of biological role, binds directly to 23S ribosomal RNA and is necessary for the in vitro assembly process of the 50S ribosomal subunit. It is not involved in the protein synthesizing functions of that subunit. The chain is Large ribosomal subunit protein bL20 (rplT) from Chlamydia trachomatis serovar D (strain ATCC VR-885 / DSM 19411 / UW-3/Cx).